A 485-amino-acid chain; its full sequence is Putative phosphoethanolamine transferase HI_1064 (485 aa).

The next 4 helical transmembrane spans lie at 33–53 (ILPA…ILIG), 55–75 (GMFT…ILLL), 81–101 (SFYF…PTGL), and 125–145 (FLLQ…ILIF).

The protein belongs to the phosphoethanolamine transferase family.

It localises to the cell membrane. The chain is Putative phosphoethanolamine transferase HI_1064 from Haemophilus influenzae (strain ATCC 51907 / DSM 11121 / KW20 / Rd).